Consider the following 156-residue polypeptide: Ribosome maturation factor RimP (156 aa).

It belongs to the RimP family.

It is found in the cytoplasm. In terms of biological role, required for maturation of 30S ribosomal subunits. This is Ribosome maturation factor RimP from Fusobacterium nucleatum subsp. nucleatum (strain ATCC 25586 / DSM 15643 / BCRC 10681 / CIP 101130 / JCM 8532 / KCTC 2640 / LMG 13131 / VPI 4355).